Reading from the N-terminus, the 171-residue chain is 3-hydroxydecanoyl-[acyl-carrier-protein] dehydratase (171 aa).

Histidine 70 is an active-site residue.

The protein belongs to the thioester dehydratase family. FabA subfamily. As to quaternary structure, homodimer.

Its subcellular location is the cytoplasm. It carries out the reaction a (3R)-hydroxyacyl-[ACP] = a (2E)-enoyl-[ACP] + H2O. It catalyses the reaction (3R)-hydroxydecanoyl-[ACP] = (2E)-decenoyl-[ACP] + H2O. The catalysed reaction is (2E)-decenoyl-[ACP] = (3Z)-decenoyl-[ACP]. The protein operates within lipid metabolism; fatty acid biosynthesis. Functionally, necessary for the introduction of cis unsaturation into fatty acids. Catalyzes the dehydration of (3R)-3-hydroxydecanoyl-ACP to E-(2)-decenoyl-ACP and then its isomerization to Z-(3)-decenoyl-ACP. Can catalyze the dehydratase reaction for beta-hydroxyacyl-ACPs with saturated chain lengths up to 16:0, being most active on intermediate chain length. The polypeptide is 3-hydroxydecanoyl-[acyl-carrier-protein] dehydratase (Stenotrophomonas maltophilia (strain K279a)).